Here is a 92-residue protein sequence, read N- to C-terminus: MSRSSKKGPYIEPSLMKKVQAMKAADKKKPIKTWSRRSTIFPDFVGLNFEVHNGKSFVNVYVTEDMIGHKLGEFAQTRTFKQHTSNRKDLAK.

The protein belongs to the universal ribosomal protein uS19 family.

In terms of biological role, protein S19 forms a complex with S13 that binds strongly to the 16S ribosomal RNA. The polypeptide is Small ribosomal subunit protein uS19 (Malacoplasma penetrans (strain HF-2) (Mycoplasma penetrans)).